The sequence spans 233 residues: tRNA (guanine-N(7)-)-methyltransferase (233 aa).

4 residues coordinate S-adenosyl-L-methionine: glutamate 62, glutamate 87, aspartate 116, and aspartate 138. Aspartate 138 is a catalytic residue. Residues lysine 142, aspartate 174, and 212–215 contribute to the substrate site; that span reads TRYE.

It belongs to the class I-like SAM-binding methyltransferase superfamily. TrmB family.

The enzyme catalyses guanosine(46) in tRNA + S-adenosyl-L-methionine = N(7)-methylguanosine(46) in tRNA + S-adenosyl-L-homocysteine. It participates in tRNA modification; N(7)-methylguanine-tRNA biosynthesis. Catalyzes the formation of N(7)-methylguanine at position 46 (m7G46) in tRNA. This Bartonella quintana (strain Toulouse) (Rochalimaea quintana) protein is tRNA (guanine-N(7)-)-methyltransferase.